The primary structure comprises 215 residues: Cytochrome b6 (215 aa).

A helical membrane pass occupies residues 32 to 52 (IFYCLGGITLTCFLVQVASGF). Heme c is bound at residue Cys35. Residues His86 and His100 each contribute to the heme b site. 3 consecutive transmembrane segments (helical) span residues 90 to 110 (ASMM…TGGF), 116 to 136 (LTWV…VTGY), and 186 to 206 (LHTF…FLMI). Residues His187 and His202 each coordinate heme b.

Belongs to the cytochrome b family. PetB subfamily. The 4 large subunits of the cytochrome b6-f complex are cytochrome b6, subunit IV (17 kDa polypeptide, PetD), cytochrome f and the Rieske protein, while the 4 small subunits are PetG, PetL, PetM and PetN. The complex functions as a dimer. Requires heme b as cofactor. The cofactor is heme c.

Its subcellular location is the plastid. The protein resides in the chloroplast thylakoid membrane. Its function is as follows. Component of the cytochrome b6-f complex, which mediates electron transfer between photosystem II (PSII) and photosystem I (PSI), cyclic electron flow around PSI, and state transitions. This is Cytochrome b6 from Anthoceros angustus (Hornwort).